Reading from the N-terminus, the 80-residue chain is RNA-binding protein Hfq (80 aa).

Residues 7–67 (ESFLNTARKK…ITTIVPHERL (61 aa)) enclose the Sm domain.

The protein belongs to the Hfq family. In terms of assembly, homohexamer.

RNA chaperone that binds small regulatory RNA (sRNAs) and mRNAs to facilitate mRNA translational regulation in response to envelope stress, environmental stress and changes in metabolite concentrations. Also binds with high specificity to tRNAs. This chain is RNA-binding protein Hfq, found in Aquifex aeolicus (strain VF5).